The sequence spans 610 residues: Zinc metalloproteinase-disintegrin-like 3a (610 aa).

Positions 1–19 are cleaved as a signal peptide; sequence MIQVLLVTILAVFPYQGSS. A propeptide spanning residues 20–188 is cleaved from the precursor; that stretch reads IILGSGNVND…KKASQLVVTA (169 aa). The 197-residue stretch at 198–394 folds into the Peptidase M12B domain; sequence RYVELVIVAD…YTPKCILNEP (197 aa). E201 serves as a coordination point for Ca(2+). Residue N217 is glycosylated (N-linked (GlcNAc...) asparagine). Residue D285 participates in Ca(2+) binding. 3 disulfide bridges follow: C309–C389, C349–C373, and C351–C356. H334 is a binding site for Zn(2+). Residue E335 is part of the active site. Residues H338 and H344 each contribute to the Zn(2+) site. C389, N392, V404, N407, E411, E414, and D417 together coordinate Ca(2+). One can recognise a Disintegrin domain in the interval 402 to 488; that stretch reads PPVCGNELLE…DCPTDDFHKN (87 aa). 14 cysteine pairs are disulfide-bonded: C405–C434, C416–C429, C418–C424, C428–C451, C442–C448, C447–C473, C460–C480, C467–C499, C492–C504, C511–C561, C526–C572, C539–C549, C556–C598, and C592–C603. The D/ECD-tripeptide signature appears at 466–468; the sequence is ECD.

Belongs to the venom metalloproteinase (M12B) family. P-III subfamily. The cofactor is Zn(2+). Expressed by the venom gland.

The protein localises to the secreted. Functionally, snake venom metalloproteinase that impairs hemostasis in the envenomed animal. This is Zinc metalloproteinase-disintegrin-like 3a from Crotalus adamanteus (Eastern diamondback rattlesnake).